The chain runs to 121 residues: NADH-quinone oxidoreductase subunit A (121 aa).

The next 3 membrane-spanning stretches (helical) occupy residues 8–28 (YLPIFMQMGLAVGFVVLTIIG), 65–85 (LVAILFVLFDVEVIFLYPWAI), and 93–113 (QGMIKMVIFMSLLLVGFFYII).

The protein belongs to the complex I subunit 3 family. NDH-1 is composed of 14 different subunits. Subunits NuoA, H, J, K, L, M, N constitute the membrane sector of the complex.

The protein localises to the cell inner membrane. The catalysed reaction is a quinone + NADH + 5 H(+)(in) = a quinol + NAD(+) + 4 H(+)(out). Functionally, NDH-1 shuttles electrons from NADH, via FMN and iron-sulfur (Fe-S) centers, to quinones in the respiratory chain. The immediate electron acceptor for the enzyme in this species is believed to be a menaquinone. Couples the redox reaction to proton translocation (for every two electrons transferred, four hydrogen ions are translocated across the cytoplasmic membrane), and thus conserves the redox energy in a proton gradient. This chain is NADH-quinone oxidoreductase subunit A, found in Flavobacterium psychrophilum (strain ATCC 49511 / DSM 21280 / CIP 103535 / JIP02/86).